The sequence spans 331 residues: Geranylgeranyl pyrophosphate synthase dpmaD (331 aa).

Isopentenyl diphosphate is bound by residues Lys53, Arg56, and His85. Mg(2+)-binding residues include Asp92 and Asp96. Arg101 provides a ligand contact to dimethylallyl diphosphate. Arg102 lines the isopentenyl diphosphate pocket. Dimethylallyl diphosphate is bound by residues Lys179, Thr180, and Gln213. Residue Asp216 participates in Mg(2+) binding. Asn220, Lys230, and Lys240 together coordinate dimethylallyl diphosphate.

Belongs to the FPP/GGPP synthase family. It depends on Mg(2+) as a cofactor.

It catalyses the reaction isopentenyl diphosphate + dimethylallyl diphosphate = (2E)-geranyl diphosphate + diphosphate. It carries out the reaction isopentenyl diphosphate + (2E)-geranyl diphosphate = (2E,6E)-farnesyl diphosphate + diphosphate. The catalysed reaction is isopentenyl diphosphate + (2E,6E)-farnesyl diphosphate = (2E,6E,10E)-geranylgeranyl diphosphate + diphosphate. Its pathway is secondary metabolite biosynthesis; terpenoid biosynthesis. In terms of biological role, geranylgeranyl pyrophosphate synthase; part of the gene cluster that mediates the biosynthesis of the diterpenoid pyrones subglutinols A and B. The first step of the pathway is the synthesis of the alpha-pyrone moiety by the polyketide synthase dpmaA via condensation of one acetyl-CoA starter unit with 3 malonyl-CoA units and 2 methylations. The alpha-pyrone is then combined with geranylgeranyl pyrophosphate (GGPP) formed by the GGPP synthase dpmaD through the action of the prenyltransferase dpmaC to yield a linear alpha-pyrone diterpenoid. Subsequent steps in the diterpenoid pyrone biosynthetic pathway involve the decalin core formation, which is initiated by the epoxidation of the C10-C11 olefin by the FAD-dependent oxidoreductase dpmaE, and is followed by a cyclization cascade catalyzed by the terpene cyclase dpmaB. The dehydrogenase dpmaF is then involved in tetrahydrofuran (THF) ring formation at the C5 unit to complete the formation of subglutinols A and B. In Metarhizium anisopliae (Entomophthora anisopliae), this protein is Geranylgeranyl pyrophosphate synthase dpmaD.